A 320-amino-acid chain; its full sequence is MRVLSGIQPTGRPHWGNYFGAIRQYIDLQEDNEGFYFIADLHALTTVREPEVLRENVMNAALDLLALGLDPSKANLFVQSDIPEVTELTWLLMTGTPMGLLERCHAFKEKKAKGLTADAGLFTYPVLMAADILAYDSQIVPVGVDQVQHIEVCRDLAGSFHHAFGETFVLPKAKTLDVGAKVPGTDGQKMSKSYNNTLPLFGEVKKIRKQIMRIVTDSRPMEDPKDPTDDHLFQLYQLFAGPAEVETMAAKYRAGGFGYGEIKKAVAEVSEEYFAPARAKREELESDLDTVRDILAEGAKRAREVAASVVDRARRNCGLR.

Residues 8–10 (QPT) and 16–17 (GN) contribute to the ATP site. Positions 9–17 (PTGRPHWGN) match the 'HIGH' region motif. Aspartate 131 serves as a coordination point for L-tryptophan. ATP is bound by residues 143–145 (GVD), valine 182, and 189–193 (KMSKS). The short motif at 189 to 193 (KMSKS) is the 'KMSKS' region element.

The protein belongs to the class-I aminoacyl-tRNA synthetase family. As to quaternary structure, homodimer.

It is found in the cytoplasm. The enzyme catalyses tRNA(Trp) + L-tryptophan + ATP = L-tryptophyl-tRNA(Trp) + AMP + diphosphate + H(+). Catalyzes the attachment of tryptophan to tRNA(Trp). This is Tryptophan--tRNA ligase from Rhodopirellula baltica (strain DSM 10527 / NCIMB 13988 / SH1).